The chain runs to 338 residues: Ferredoxin--NADP reductase (338 aa).

FAD-binding residues include aspartate 38, glutamine 46, tyrosine 51, valine 91, phenylalanine 125, aspartate 291, and threonine 331.

Belongs to the ferredoxin--NADP reductase type 2 family. In terms of assembly, homodimer. FAD is required as a cofactor.

It catalyses the reaction 2 reduced [2Fe-2S]-[ferredoxin] + NADP(+) + H(+) = 2 oxidized [2Fe-2S]-[ferredoxin] + NADPH. The chain is Ferredoxin--NADP reductase from Orientia tsutsugamushi (strain Ikeda) (Rickettsia tsutsugamushi).